Here is a 78-residue protein sequence, read N- to C-terminus: UPF0612 protein new22 (78 aa).

It belongs to the UPF0612 family.

This chain is UPF0612 protein new22 (new22), found in Schizosaccharomyces pombe (strain 972 / ATCC 24843) (Fission yeast).